Consider the following 258-residue polypeptide: MDDDLTEYAPDIPDNVLELIFSYLKLQDLRNCSLVCKSWNRFLNDENNEVWRAQCMQKLSPDAFKTDLLSVVPTYKAKLRAFFHAWNPYDCSRHVYIKPNGFTLHRNPVAQSTDGSRGKIGFQHGRHAWEVRWEGPLGTVAVVGIATKDAAIQCHGYYALLGADDQSWGWNLVDNLLLHNGDAHGIYPLLNNAPKYKVGERIRVILDCDDNTLSFEKNYEFLGVAFTDLPDKVFYPTVAAVYGNTEISMVYLGPPLDG.

The F-box domain maps to 6-54; that stretch reads TEYAPDIPDNVLELIFSYLKLQDLRNCSLVCKSWNRFLNDENNEVWRAQ. The 193-residue stretch at 64-256 folds into the B30.2/SPRY domain; sequence FKTDLLSVVP…ISMVYLGPPL (193 aa).

This sequence belongs to the FBXO45/Fsn family. In terms of assembly, component of an E3 ubiquitin ligase complex composed of hiw and Fsn.

It localises to the synapse. It functions in the pathway protein modification; protein ubiquitination. Its function is as follows. Required in the presynaptic motoneuron to down-regulate the levels of wnd and restrain synaptic terminal growth at the neuromuscular junction (NMJ). This Aedes aegypti (Yellowfever mosquito) protein is F-box/SPRY domain-containing protein 1.